Here is a 335-residue protein sequence, read N- to C-terminus: Fructose-1,6-bisphosphatase class 1 (335 aa).

Glu-92, Asp-115, Leu-117, and Asp-118 together coordinate Mg(2+). Substrate is bound by residues 118–121, Asn-211, Tyr-244, 262–264, and Lys-274; these read DGSS and YLY. Position 280 (Glu-280) interacts with Mg(2+).

This sequence belongs to the FBPase class 1 family. As to quaternary structure, homotetramer. Mg(2+) serves as cofactor.

Its subcellular location is the cytoplasm. It catalyses the reaction beta-D-fructose 1,6-bisphosphate + H2O = beta-D-fructose 6-phosphate + phosphate. It functions in the pathway carbohydrate biosynthesis; gluconeogenesis. The protein is Fructose-1,6-bisphosphatase class 1 of Teredinibacter turnerae (strain ATCC 39867 / T7901).